The chain runs to 557 residues: Urocanate hydratase (557 aa).

NAD(+) contacts are provided by residues 53–54 (GG), glutamine 131, 177–179 (GMG), glutamate 197, arginine 202, 243–244 (NA), 264–268 (QTSAH), 274–275 (YL), and tyrosine 323. Cysteine 411 is an active-site residue. Position 493 (glycine 493) interacts with NAD(+).

Belongs to the urocanase family. NAD(+) is required as a cofactor.

Its subcellular location is the cytoplasm. It catalyses the reaction 4-imidazolone-5-propanoate = trans-urocanate + H2O. The protein operates within amino-acid degradation; L-histidine degradation into L-glutamate; N-formimidoyl-L-glutamate from L-histidine: step 2/3. In terms of biological role, catalyzes the conversion of urocanate to 4-imidazolone-5-propionate. The protein is Urocanate hydratase of Pseudomonas putida (strain GB-1).